The sequence spans 304 residues: Glycine--tRNA ligase alpha subunit (304 aa).

This sequence belongs to the class-II aminoacyl-tRNA synthetase family. In terms of assembly, tetramer of two alpha and two beta subunits.

It localises to the cytoplasm. The catalysed reaction is tRNA(Gly) + glycine + ATP = glycyl-tRNA(Gly) + AMP + diphosphate. The chain is Glycine--tRNA ligase alpha subunit from Streptococcus agalactiae serotype III (strain NEM316).